Reading from the N-terminus, the 370-residue chain is Formate dehydrogenase (370 aa).

Residues Ile-94 and Asn-120 each coordinate substrate. NAD(+) is bound by residues Arg-175–Ile-176, Asp-196, Pro-231–Ser-235, Thr-257, Asp-283, and His-312–Gly-315.

It belongs to the D-isomer specific 2-hydroxyacid dehydrogenase family. FDH subfamily. In terms of assembly, homodimer.

Its subcellular location is the cytoplasm. It carries out the reaction formate + NAD(+) = CO2 + NADH. Its function is as follows. Catalyzes the NAD(+)-dependent oxidation of formate to carbon dioxide. Formate oxidation is the final step in the methanol oxidation pathway in methylotrophic microorganisms. Has a role in the detoxification of exogenous formate in non-methylotrophic organisms. This chain is Formate dehydrogenase, found in Chaetomium thermophilum (strain DSM 1495 / CBS 144.50 / IMI 039719) (Thermochaetoides thermophila).